The primary structure comprises 315 residues: MFTFILMFYIGYGIDFNTWVANNNKHFTAVESLRRRAIFNMNARIVAENNRKETFKLSVDGPFAAMTNEEYNSLLKLKRSGEEKGEVRYLNIQAPKAVDWRKKGKVTPIRDQGNCGSCYTFGSIAALEGRLLIEKGGDSETLDLSEEHMVQCTREDGNNGCNGGLGSNVYNYIMENGIAKESDYPYTGSDSTCRSDVKAFAKIKSYNRVARNNEVELKAAISQGLVDVSIDASSVQFQLYKSGAYTDKQCKNNYFALNHEVCAVGYGVVDGKECWIVRNSWGTGWGEKGYINMVIEGNTCGVATDPLYPTGVEYL.

The signal sequence occupies residues 1–13 (MFTFILMFYIGYG). Positions 14–93 (IDFNTWVANN…KGEVRYLNIQ (80 aa)) are cleaved as a propeptide — activation peptide. 2 disulfides stabilise this stretch: C115–C161 and C152–C193. Residue C118 is part of the active site. Catalysis depends on residues H259 and N279.

It belongs to the peptidase C1 family.

It is found in the lysosome. With respect to regulation, inhibited by cysteine protease inhibitors ICP1 and ICP2. Its function is as follows. Cysteine protease which degrades matrix proteins such as collagen, laminin and fibronectin and thus is involved in the destruction of human tissue. Can abolish adhesion. May play an important role in pathogenicity. In Entamoeba histolytica (strain ATCC 30459 / HM-1:IMSS / ABRM), this protein is Cysteine proteinase 1.